The sequence spans 190 residues: High affinity copper uptake protein 1 (190 aa).

The disordered stretch occupies residues 1 to 35; it reads MDHSHHMGMSYMDSNSTMQPSHHHPTTSASHSHGG. Topologically, residues 1–61 are extracellular; sequence MDHSHHMGMS…KNVELLFSGL (61 aa). The Bis-His motif signature appears at 5 to 6; the sequence is HH. The short motif at 7-12 is the Methionine segments (Mets) motif element; sequence MGMSYM. Asparagine 15 carries N-linked (GlcNAc...) asparagine glycosylation. Low complexity predominate over residues 26 to 35; that stretch reads TTSASHSHGG. An O-linked (GalNAc...) threonine glycan is attached at threonine 27. The helical transmembrane segment at 62-82 threads the bilayer; that stretch reads VINTAGEMAGAFVAVFLLAMF. Residues 83-132 lie on the Cytoplasmic side of the membrane; it reads YEGLKIARESLLRKSQVSIRYNSMPVPGPNGTILMETHKTVGQQMLSFPH. Threonine 114 bears the Phosphothreonine mark. Residues 133–153 form a helical membrane-spanning segment; it reads LLQTVLHIIQVVISYFLMLIF. The Extracellular segment spans residues 154-156; sequence MTY. Residues 157 to 177 form a helical membrane-spanning segment; it reads NGYLCIAVAAGAGTGYFLFSW. Residues 178-190 lie on the Cytoplasmic side of the membrane; the sequence is KKAVVVDITEHCH. Position 189 is a cysteine sulfenic acid (-SOH) (cysteine 189).

It belongs to the copper transporter (Ctr) (TC 1.A.56) family. SLC31A subfamily. Homotrimer; is stabilized by cisplatin via interactions between cisplatin and the methionine-rich clusters, and could be crucial for the copper(2+) reduction process and copper(1+) stabilization. Heterotrimer between SLC31A1, CCS and SOD1; this heterotrimer is copper(1+)-mediated and its maintenance is regulated through SOD1 activation. Interacts with KDR; this interaction is induced upon VEGFA stimulation leading to SLC31A1 and KDR subsequent co-internalization to early endosomes, thereby activating KDR downstream signaling in endothelial cells. Interacts (via C-terminal domain) with ATOX1 (via dimer form); this interaction improves ATOX1 stability and controls intracellular copper(1+) levels. Interacts with SLC31A2; this interaction stabilizes SLC31A2 and protects its from ubiquitination and degradation. Interacts (via C-terminal domain) with CCS; this interaction is copper(1+)-mediated. O-Glycosylation at Thr-27 protects from proteolytic cleavage in the N-terminal extracellular domain. Post-translationally, proteolytic cleavage, leading to a truncated form, is facilitated by SLC31A2 and initiated preferentially by CTSL and to a minor extend by CTSB in endolysosomal compartments. In vitro, is cleaved by CTSL/cathepsin L between residues 8 and 9 from the amino terminus. A post-CTSL/cathepsin L processing occurs to yield to the fully truncated form. In terms of processing, sulfenylated at Cys-189 after stimulation with VEGFA, which induces SLC31A1-KDR disulfide bond formation and their co-internalization to early endosomes, driving to a sustained VEGFR2 signaling.

Its subcellular location is the cell membrane. It is found in the early endosome membrane. The protein resides in the recycling endosome membrane. It localises to the apical cell membrane. The protein localises to the late endosome membrane. Its subcellular location is the basolateral cell membrane. The enzyme catalyses Ag(+)(out) = Ag(+)(in). The catalysed reaction is Cu(+)(out) = Cu(+)(in). Copper(1+) transport is stimulated by extracellular acidic pH and high potassium ions concentrations. Copper(1+) import is regulated by a copper(1+)-dependent recycling of SLC31A1. Functionally, uniporter that mediates the transport of copper(1+) from the extracellular space to the cytoplasm, across the plasma membrane and delivers directly copper(1+) to specific chaperone such as ATOX1, via a copper(1+)- mediated transient interaction between the C-terminal domain and a copper(1+) chaperone, thus controlling intracellular copper(1+) levels. May function in copper(1+) import from the apical membrane thus may drive intestinal copper absorption. The copper(1+) transport mechanism is sodium-independent, saturable and of high-affinity. Also mediates the uptake of silver(1+). May function in the influx of the platinum-containing chemotherapeutic agents. The platinum-containing chemotherapeutic agents uptake is saturable. In vitro, mediates the transport of cadmium(2+) into cells. Also participates in the first step of copper(2+) acquisition by cells through a direct transfer of copper(2+) from copper(2+) carriers in blood, such as ALB to the N-terminal domain of SLC31A1, leading to copper(2+) reduction and probably followed by copper(1+) stabilization. In addition, functions as a redox sensor to promote angiogenesis in endothelial cells, in a copper(1+) transport independent manner, by transmitting the VEGF-induced ROS signal through a sulfenylation at Cys-189 leadin g to a subsequent disulfide bond formation between SLC31A1 and KDR. The SLC31A1-KDR complex is then co-internalized to early endosomes, driving a sustained VEGFR2 signaling. In terms of biological role, mobilizes copper(1+) out of the endosomal compartment, making copper(1+) available for export out of the cells. This chain is High affinity copper uptake protein 1, found in Homo sapiens (Human).